Consider the following 143-residue polypeptide: Photosystem I reaction center subunit IV A, chloroplastic (143 aa).

The N-terminal 44 residues, 1–44 (MAMTTASTVFVLPANVTSVAGASSSRSSVSFLPMRNAGSRLVVR), are a transit peptide targeting the chloroplast. A disordered region spans residues 43–85 (VRAAEDPAPASSSSKDSPAAAAAPDGATATKPKPPPIGPKRGS). Positions 48–73 (DPAPASSSSKDSPAAAAAPDGATATK) are enriched in low complexity.

Belongs to the PsaE family. 2 isoforms may exist. With or without the N-terminal alanine.

The protein localises to the plastid. The protein resides in the chloroplast thylakoid membrane. In terms of biological role, stabilizes the interaction between PsaC and the PSI core, assists the docking of the ferredoxin to PSI and interacts with ferredoxin-NADP oxidoreductase. The chain is Photosystem I reaction center subunit IV A, chloroplastic (PSAE1) from Arabidopsis thaliana (Mouse-ear cress).